Here is a 315-residue protein sequence, read N- to C-terminus: Homoserine kinase (315 aa).

97-107 (PPARGLGSSAT) provides a ligand contact to ATP.

It belongs to the GHMP kinase family. Homoserine kinase subfamily.

Its subcellular location is the cytoplasm. The enzyme catalyses L-homoserine + ATP = O-phospho-L-homoserine + ADP + H(+). Its pathway is amino-acid biosynthesis; L-threonine biosynthesis; L-threonine from L-aspartate: step 4/5. Its function is as follows. Catalyzes the ATP-dependent phosphorylation of L-homoserine to L-homoserine phosphate. The polypeptide is Homoserine kinase (Prochlorococcus marinus (strain NATL1A)).